A 389-amino-acid polypeptide reads, in one-letter code: POU domain, class 5, transcription factor 3 (389 aa).

2 stretches are compositionally biased toward low complexity: residues 1–18 and 145–165; these read MFSPDGGLPAAPFGLLPD and LANLGSSGSSSGAASEGGHSS. Disordered regions lie at residues 1 to 88 and 145 to 177; these read MFSP…APPA and LANLGSSGSSSGAASEGGHSSDSGDEDAPTSEE. Positions 167-177 are enriched in acidic residues; that stretch reads SGDEDAPTSEE. The 75-residue stretch at 170-244 folds into the POU-specific domain; it reads EDAPTSEELE…LLQRWLNEAE (75 aa). A DNA-binding region (homeobox) is located at residues 264-323; it reads KRKRRTSIETNVKGTLESFFRKCVKPSPQEISQIAEDLNLDKDVVRVWFCNRRQKGKRLL.

The protein belongs to the POU transcription factor family.

Its subcellular location is the nucleus. Its function is as follows. Required for the maintenance of pluripotency and self-renewal of embryonic stem cells. Transcriptional activator that binds the DNA consensus sequence 5'-ATGCAAAT-3'. This is POU domain, class 5, transcription factor 3 (POU5F3) from Gallus gallus (Chicken).